Reading from the N-terminus, the 366-residue chain is Agamous-like MADS-box protein AGL36 (366 aa).

One can recognise an MADS-box domain in the interval 1-59 (MKKVKLSLIANERSRKTSFIKRKDGIFKKLHELSTLCGVQACALIYSPFIPVPESWPSR). The stretch at 86-115 (TYLMERITKAKEQLKNLAAENRELQVRRFM) forms a coiled coil.

In terms of assembly, interacts with AGL62.

It is found in the nucleus. Probable transcription factor. The chain is Agamous-like MADS-box protein AGL36 (AGL36) from Arabidopsis thaliana (Mouse-ear cress).